Consider the following 502-residue polypeptide: Maturase K (502 aa).

The protein belongs to the intron maturase 2 family. MatK subfamily.

Its subcellular location is the plastid. It localises to the chloroplast. Functionally, usually encoded in the trnK tRNA gene intron. Probably assists in splicing its own and other chloroplast group II introns. This chain is Maturase K, found in Arabis blepharophylla (Coast rock-cress).